Reading from the N-terminus, the 36-residue chain is Photosystem I reaction center subunit VIII (36 aa).

Residues 8–28 (SIFVPLVGLVFPAIAIASLFL) form a helical membrane-spanning segment.

Belongs to the PsaI family.

Its subcellular location is the plastid. The protein resides in the chloroplast thylakoid membrane. Its function is as follows. May help in the organization of the PsaL subunit. The protein is Photosystem I reaction center subunit VIII of Jasminum nudiflorum (Winter jasmine).